A 511-amino-acid polypeptide reads, in one-letter code: Glucan endo-1,3-beta-glucosidase 1 (511 aa).

Positions 1–28 (MAFTSMVSTVPVLFFFFTLLLISANSSS) are cleaved as a signal peptide. N-linked (GlcNAc...) asparagine glycosylation occurs at asparagine 109. Glutamate 137 acts as the Proton donor in catalysis. N-linked (GlcNAc...) asparagine glycosylation is found at asparagine 192 and asparagine 274. Glutamate 284 serves as the catalytic Nucleophile. Residues asparagine 374, asparagine 378, asparagine 407, asparagine 473, and asparagine 480 are each glycosylated (N-linked (GlcNAc...) asparagine). Residues cysteine 382 and cysteine 445 are joined by a disulfide bond. Residue alanine 485 is the site of GPI-anchor amidated alanine attachment. Positions 486 to 511 (AGEATSRSLSRGFCVTIMILVTFSIL) are cleaved as a propeptide — removed in mature form.

The protein belongs to the glycosyl hydrolase 17 family. Contains two additional disulfide bonds.

The protein resides in the cell membrane. The enzyme catalyses Hydrolysis of (1-&gt;3)-beta-D-glucosidic linkages in (1-&gt;3)-beta-D-glucans.. The chain is Glucan endo-1,3-beta-glucosidase 1 from Arabidopsis thaliana (Mouse-ear cress).